The following is a 259-amino-acid chain: uncharacterized protein (259 aa).

Disordered stretches follow at residues glycine 22–glycine 68, arginine 111–glutamate 133, and leucine 181–glutamine 202. Over residues asparagine 50 to glutamate 63 the composition is skewed to acidic residues. Serine 127 carries the phosphoserine modification.

This is an uncharacterized protein from Schizosaccharomyces pombe (strain 972 / ATCC 24843) (Fission yeast).